A 200-amino-acid polypeptide reads, in one-letter code: Holliday junction branch migration complex subunit RuvA (200 aa).

The tract at residues 1 to 63 (MIAFVRGQVA…EDSLTLFGFA (63 aa)) is domain I. A domain II region spans residues 64–142 (DEDEKQTFEL…APTGAGRSAG (79 aa)). Residues 142-146 (GVPAP) form a flexible linker region. The segment at 147-200 (AGAVWRDQVHQGLVGLGWPVRDAEKAVAAVAPEAGDVPDVAALLRAALRTLSKA) is domain III.

The protein belongs to the RuvA family. Homotetramer. Forms an RuvA(8)-RuvB(12)-Holliday junction (HJ) complex. HJ DNA is sandwiched between 2 RuvA tetramers; dsDNA enters through RuvA and exits via RuvB. An RuvB hexamer assembles on each DNA strand where it exits the tetramer. Each RuvB hexamer is contacted by two RuvA subunits (via domain III) on 2 adjacent RuvB subunits; this complex drives branch migration. In the full resolvosome a probable DNA-RuvA(4)-RuvB(12)-RuvC(2) complex forms which resolves the HJ.

It localises to the cytoplasm. In terms of biological role, the RuvA-RuvB-RuvC complex processes Holliday junction (HJ) DNA during genetic recombination and DNA repair, while the RuvA-RuvB complex plays an important role in the rescue of blocked DNA replication forks via replication fork reversal (RFR). RuvA specifically binds to HJ cruciform DNA, conferring on it an open structure. The RuvB hexamer acts as an ATP-dependent pump, pulling dsDNA into and through the RuvAB complex. HJ branch migration allows RuvC to scan DNA until it finds its consensus sequence, where it cleaves and resolves the cruciform DNA. This chain is Holliday junction branch migration complex subunit RuvA, found in Nocardioides sp. (strain ATCC BAA-499 / JS614).